The chain runs to 252 residues: Phosphatidylserine decarboxylase proenzyme (252 aa).

S211 acts as the Schiff-base intermediate with substrate; via pyruvic acid in catalysis. S211 carries the pyruvic acid (Ser); by autocatalysis modification.

The protein belongs to the phosphatidylserine decarboxylase family. PSD-A subfamily. In terms of assembly, heterodimer of a large membrane-associated beta subunit and a small pyruvoyl-containing alpha subunit. The cofactor is pyruvate. Post-translationally, is synthesized initially as an inactive proenzyme. Formation of the active enzyme involves a self-maturation process in which the active site pyruvoyl group is generated from an internal serine residue via an autocatalytic post-translational modification. Two non-identical subunits are generated from the proenzyme in this reaction, and the pyruvate is formed at the N-terminus of the alpha chain, which is derived from the carboxyl end of the proenzyme. The post-translation cleavage follows an unusual pathway, termed non-hydrolytic serinolysis, in which the side chain hydroxyl group of the serine supplies its oxygen atom to form the C-terminus of the beta chain, while the remainder of the serine residue undergoes an oxidative deamination to produce ammonia and the pyruvoyl prosthetic group on the alpha chain.

The protein resides in the cell membrane. The catalysed reaction is a 1,2-diacyl-sn-glycero-3-phospho-L-serine + H(+) = a 1,2-diacyl-sn-glycero-3-phosphoethanolamine + CO2. Its pathway is phospholipid metabolism; phosphatidylethanolamine biosynthesis; phosphatidylethanolamine from CDP-diacylglycerol: step 2/2. Functionally, catalyzes the formation of phosphatidylethanolamine (PtdEtn) from phosphatidylserine (PtdSer). The sequence is that of Phosphatidylserine decarboxylase proenzyme from Novosphingobium aromaticivorans (strain ATCC 700278 / DSM 12444 / CCUG 56034 / CIP 105152 / NBRC 16084 / F199).